Here is a 500-residue protein sequence, read N- to C-terminus: ATP synthase subunit alpha (500 aa).

168-175 is a binding site for ATP; it reads GDRQTGKT.

This sequence belongs to the ATPase alpha/beta chains family. In terms of assembly, F-type ATPases have 2 components, CF(1) - the catalytic core - and CF(0) - the membrane proton channel. CF(1) has five subunits: alpha(3), beta(3), gamma(1), delta(1), epsilon(1). CF(0) has three main subunits: a(1), b(2) and c(9-12). The alpha and beta chains form an alternating ring which encloses part of the gamma chain. CF(1) is attached to CF(0) by a central stalk formed by the gamma and epsilon chains, while a peripheral stalk is formed by the delta and b chains.

The protein localises to the cell membrane. The enzyme catalyses ATP + H2O + 4 H(+)(in) = ADP + phosphate + 5 H(+)(out). Its function is as follows. Produces ATP from ADP in the presence of a proton gradient across the membrane. The alpha chain is a regulatory subunit. In Streptococcus suis (strain 98HAH33), this protein is ATP synthase subunit alpha.